Reading from the N-terminus, the 380-residue chain is Actinidain (380 aa).

The signal sequence occupies residues 1-24 (MGLPKSFVSMSLLFFSTLLILSLA). A propeptide spans 25–126 (FNAKNLTQRT…NRYEPRVGQV (102 aa)) (activation peptide). Asn-29, Asn-81, and Asn-111 each carry an N-linked (GlcNAc...) asparagine glycan. 3 disulfides stabilise this stretch: Cys-148/Cys-191, Cys-182/Cys-224, and Cys-282/Cys-332. Cys-151 is a catalytic residue. Residues His-288 and Asn-308 contribute to the active site.

The protein belongs to the peptidase C1 family. As to expression, fruit, present in small cells of the outer pericarp of mature fruit, but not large cells.

The enzyme catalyses Specificity close to that of papain.. Functionally, cysteine protease responsible for the cleavage of kiwellin into kissper and KiTH. This Actinidia deliciosa (Kiwi) protein is Actinidain.